Here is a 174-residue protein sequence, read N- to C-terminus: Large ribosomal subunit protein uL10 (174 aa).

Belongs to the universal ribosomal protein uL10 family. As to quaternary structure, part of the ribosomal stalk of the 50S ribosomal subunit. The N-terminus interacts with L11 and the large rRNA to form the base of the stalk. The C-terminus forms an elongated spine to which L12 dimers bind in a sequential fashion forming a multimeric L10(L12)X complex.

Its function is as follows. Forms part of the ribosomal stalk, playing a central role in the interaction of the ribosome with GTP-bound translation factors. The sequence is that of Large ribosomal subunit protein uL10 from Anaeromyxobacter sp. (strain Fw109-5).